Reading from the N-terminus, the 517-residue chain is Glycerol kinase (517 aa).

An ADP-binding site is contributed by Thr24. Residues Thr24, Thr25, and Ser26 each contribute to the ATP site. Thr24 contacts sn-glycerol 3-phosphate. Position 28 (Arg28) interacts with ADP. The sn-glycerol 3-phosphate site is built by Arg94, Glu95, Tyr146, and Asp261. Residues Arg94, Glu95, Tyr146, Asp261, and Gln262 each contribute to the glycerol site. ADP is bound by residues Thr283 and Gly327. The ATP site is built by Thr283, Gly327, Gln331, and Gly428. Gly428 and Asn432 together coordinate ADP.

It belongs to the FGGY kinase family.

The enzyme catalyses glycerol + ATP = sn-glycerol 3-phosphate + ADP + H(+). It participates in polyol metabolism; glycerol degradation via glycerol kinase pathway; sn-glycerol 3-phosphate from glycerol: step 1/1. With respect to regulation, inhibited by fructose 1,6-bisphosphate (FBP). In terms of biological role, key enzyme in the regulation of glycerol uptake and metabolism. Catalyzes the phosphorylation of glycerol to yield sn-glycerol 3-phosphate. This is Glycerol kinase from Mycobacterium tuberculosis (strain ATCC 25177 / H37Ra).